A 381-amino-acid chain; its full sequence is ATP synthase subunit a (381 aa).

A disordered region spans residues 24 to 73 (PVAAPVEQHGQAPEAAPDAHGSPAGEPGAAVEAHAAAAEHGEAAGHEGGH). Positions 47-59 (AGEPGAAVEAHAA) are enriched in low complexity. The span at 60-73 (AAEHGEAAGHEGGH) shows a compositional bias: basic and acidic residues. The next 6 helical transmembrane spans lie at 128–148 (KHVVMMWLASALLLVVVLGAV), 190–210 (LVTAFFFILFLNLFGLLPFSA), 215–235 (NLSVTVAMALFTFVITQYAAI), 255–275 (LAPLWLIMIPVEFLGLFTKPF), 290–310 (FVILALLGLIFALGTPWVAFG), and 316–336 (LSIFLLELFVAFVQAYIFTML). The segment covering 351-360 (DHGHAEEHGH) has biased composition (basic and acidic residues). The segment at 351-381 (DHGHAEEHGHAGPAAGSEHGSHVAGASPGHG) is disordered.

Belongs to the ATPase A chain family. F-type ATPases have 2 components, CF(1) - the catalytic core - and CF(0) - the membrane proton channel. CF(1) has five subunits: alpha(3), beta(3), gamma(1), delta(1), epsilon(1). CF(0) has three main subunits: a(1), b(2) and c(9-12). The alpha and beta chains form an alternating ring which encloses part of the gamma chain. CF(1) is attached to CF(0) by a central stalk formed by the gamma and epsilon chains, while a peripheral stalk is formed by the delta and b chains.

It is found in the cell inner membrane. Its function is as follows. Key component of the proton channel; it plays a direct role in the translocation of protons across the membrane. The sequence is that of ATP synthase subunit a from Anaeromyxobacter dehalogenans (strain 2CP-C).